Consider the following 1291-residue polypeptide: MAYKIRKINRNVERRDYTKVSMNLSLPNLIGIQTETFEWFKTKGIQEVLDEFFPILSFDGSSVLTLENWGFKEPRLSVRQAKEESKIYDAPIYANLKLSVNKTEEIQKEFDGVVLDDALQILSKWLEEKTVSKNITFKQQSQNSYFFELTIKKSEKPDLIQIDIIEDKKTSLICNVSIYKSGEVFLGDFPLMTEAGTFIINGSQKVIVSQLVRSPGAYFNKELNRKTGEMIYFADIIPSRGTWLEYETDSKKIGNDAINPLYVKIDKSRKTTATSLLLAFGISKDDILNIFDNDEVLVETLQQDSIIGDFKIDWSNQVQEIYKKITQGETATSEGASKFINSILFDKRKYDLTKAGRFKLKQKLSIKNRILNRVIAEDIVDANNNVLIAKDTEVNKHNIKQISEILDQDVMSIDLNYLSDIPGTRKVQKIKVYKDSELKTDTTCLIGLTSSSNEEFITVADILSTVSYLLNLKYNIGEIDDIDNLGNRRVRTVGELLQNQFRMGLNRIDKNVKEKLATSDLYKVKTSTIINAKPLTAIIGEFFNLSQLSQFMDQINPLSELTNKRRLTALGSGGLSRDRAGLEVRDVHPSHYGRICPIETPEGPNIGLINNLSTYARVNEYGFITTPYRKVINGIIQNDQVEYLTADQEKNFIIAQSNVNQDENGKILDEIIVSRFNGDDYMAKVEEIDYIDVSPKQIVSVATSGIPFLENDDANRALMGANMQRQAVPLIKPESPIVATGIEFEAARDSGEAIVAKEDAIVKYVDSKTIITDGESGIRTYILSDYERSNNGTSLTQSPIVKVGDVVKKGEIIADGPSMDQGELAIGQNVVVAFSTYNGYNFEDAIVMSERIVIDDRFTSTHIDEYTLEVRNTKQGQEEVIREIPNMSEQAKRHLDAEGIVAIGTEVKVGDVLVGKVTPKGQVQLSPEDKLLHAIFGEKSRNVKDNSLRVPNGGEGIVQSIKRFKAKSALNPDGIELPADIIEVIKVYVVQKRKIQEGDKMSGRHGNKGIISRILPVEDMPHLEDGTPVDIILNPQGVPSRMNIGQILEIHLGMAAKKLNQKVITPAFEGLNEKELEEIMAEAGMTNYGKVTLIDGQTGEPFDKPIAVGVMYMLKLSHMVDDKIHARNVGPYSLITQQPLGGKAQNGGQRFGEMEVWALEAYGAAHTLREILTIKSDDIKGRSKTYEAIVRSKKIPEPGIPESFNVLSKEIMGLGFNMYMIDETGEKSVINAYDKKNFDADNYEDDEILVKTDTLYIDDEDVDAEFEDLTYVDENDILRSFESENDIDEEE.

It belongs to the RNA polymerase beta chain family. The RNAP catalytic core consists of 2 alpha, 1 beta, 1 beta' and 1 omega subunit. When a sigma factor is associated with the core the holoenzyme is formed, which can initiate transcription.

It catalyses the reaction RNA(n) + a ribonucleoside 5'-triphosphate = RNA(n+1) + diphosphate. DNA-dependent RNA polymerase catalyzes the transcription of DNA into RNA using the four ribonucleoside triphosphates as substrates. This is DNA-directed RNA polymerase subunit beta from Mycoplasma mycoides subsp. mycoides SC (strain CCUG 32753 / NCTC 10114 / PG1).